The primary structure comprises 356 residues: L-lactate dehydrogenase A (356 aa).

Residues 75-80 and R121 each bind NAD(+); that span reads DALPDK. Residues R128, N160, and R191 each coordinate substrate. N160 provides a ligand contact to NAD(+). Catalysis depends on H215, which acts as the Proton acceptor. T270 serves as a coordination point for substrate.

It belongs to the LDH/MDH superfamily. LDH family. Tetramer that arise from random association of LDH-A and LDH-B.

The enzyme catalyses (S)-lactate + NAD(+) = pyruvate + NADH + H(+). It participates in fermentation; pyruvate fermentation to lactate; (S)-lactate from pyruvate: step 1/1. This chain is L-lactate dehydrogenase A, found in Hordeum vulgare (Barley).